Reading from the N-terminus, the 972-residue chain is POM121-like protein 2 (972 aa).

Disordered regions lie at residues 1–67 (MGSY…PANP), 281–302 (LKKA…SGQL), 328–359 (TEED…IPEM), 406–431 (GISS…PVTD), 676–726 (LGLS…AIDG), and 953–972 (SKTL…TYKK). The segment covering 40–57 (RVQHVHRAQPARRHRPAR) has biased composition (basic residues). Polar residues-rich tracts occupy residues 287–302 (SPNS…SGQL) and 339–352 (VPSN…TGTA). Positions 413 to 431 (PSIASTQASPSSPTTPVTD) are enriched in low complexity. A compositionally biased stretch (polar residues) spans 677–696 (GLSSTNQPPVTSSNSNVTSA). Over residues 697-706 (LTSSLGSSPK) the composition is skewed to low complexity.

The protein belongs to the POM121 family.

In Mus musculus (Mouse), this protein is POM121-like protein 2 (Pom121l2).